Here is a 421-residue protein sequence, read N- to C-terminus: Tyrosine--tRNA ligase (421 aa).

Tyr-38 is an L-tyrosine binding site. The 'HIGH' region motif lies at 43-52 (PTGDSLHIGH). Residues Tyr-169 and Gln-173 each coordinate L-tyrosine. The 'KMSKS' region signature appears at 231–235 (KFGKS). Lys-234 provides a ligand contact to ATP. In terms of domain architecture, S4 RNA-binding spans 353–419 (KNLVDFLVDT…GKKKYTLVHI (67 aa)).

Belongs to the class-I aminoacyl-tRNA synthetase family. TyrS type 1 subfamily. As to quaternary structure, homodimer.

It localises to the cytoplasm. The catalysed reaction is tRNA(Tyr) + L-tyrosine + ATP = L-tyrosyl-tRNA(Tyr) + AMP + diphosphate + H(+). In terms of biological role, catalyzes the attachment of tyrosine to tRNA(Tyr) in a two-step reaction: tyrosine is first activated by ATP to form Tyr-AMP and then transferred to the acceptor end of tRNA(Tyr). The protein is Tyrosine--tRNA ligase of Lactobacillus delbrueckii subsp. bulgaricus (strain ATCC 11842 / DSM 20081 / BCRC 10696 / JCM 1002 / NBRC 13953 / NCIMB 11778 / NCTC 12712 / WDCM 00102 / Lb 14).